The following is a 156-amino-acid chain: Small ribosomal subunit protein uS7 (156 aa).

The protein belongs to the universal ribosomal protein uS7 family. In terms of assembly, part of the 30S ribosomal subunit. Contacts proteins S9 and S11.

One of the primary rRNA binding proteins, it binds directly to 16S rRNA where it nucleates assembly of the head domain of the 30S subunit. Is located at the subunit interface close to the decoding center, probably blocks exit of the E-site tRNA. The polypeptide is Small ribosomal subunit protein uS7 (Syntrophotalea carbinolica (strain DSM 2380 / NBRC 103641 / GraBd1) (Pelobacter carbinolicus)).